The chain runs to 172 residues: 2S seed storage-like protein (172 aa).

A signal peptide spans 1 to 35 (MGVFSPSTTRLTLKWFSLSVALFLLFHWGIPSVDG). Residues 108-172 (FMDSDSQEDA…RYSMTGSSFK (65 aa)) are disordered. Residues 151-160 (EPPRRCDIQR) are compositionally biased toward basic and acidic residues.

This sequence belongs to the 2S seed storage albumins family.

The chain is 2S seed storage-like protein from Picea glauca (White spruce).